A 159-amino-acid chain; its full sequence is S-ribosylhomocysteine lyase (159 aa).

H53, H57, and C124 together coordinate Fe cation.

The protein belongs to the LuxS family. As to quaternary structure, homodimer. The cofactor is Fe cation.

It catalyses the reaction S-(5-deoxy-D-ribos-5-yl)-L-homocysteine = (S)-4,5-dihydroxypentane-2,3-dione + L-homocysteine. Functionally, involved in the synthesis of autoinducer 2 (AI-2) which is secreted by bacteria and is used to communicate both the cell density and the metabolic potential of the environment. The regulation of gene expression in response to changes in cell density is called quorum sensing. Catalyzes the transformation of S-ribosylhomocysteine (RHC) to homocysteine (HC) and 4,5-dihydroxy-2,3-pentadione (DPD). The polypeptide is S-ribosylhomocysteine lyase (Desulfotalea psychrophila (strain LSv54 / DSM 12343)).